Here is a 140-residue protein sequence, read N- to C-terminus: ATP synthase epsilon chain (140 aa).

The protein belongs to the ATPase epsilon chain family. As to quaternary structure, F-type ATPases have 2 components, CF(1) - the catalytic core - and CF(0) - the membrane proton channel. CF(1) has five subunits: alpha(3), beta(3), gamma(1), delta(1), epsilon(1). CF(0) has three main subunits: a, b and c.

The protein localises to the cell inner membrane. In terms of biological role, produces ATP from ADP in the presence of a proton gradient across the membrane. The sequence is that of ATP synthase epsilon chain from Laribacter hongkongensis (strain HLHK9).